Consider the following 62-residue polypeptide: Photosystem II reaction center X protein (62 aa).

A helical transmembrane segment spans residues I26–F46.

Belongs to the PsbX family. Type 2 subfamily. As to quaternary structure, PSII consists of a core antenna complex that captures photons, and an electron transfer chain that converts photonic excitation into a charge separation. PSII forms dimeric complexes.

It localises to the cellular thylakoid membrane. Functionally, involved in the binding and/or turnover of quinones at the Q(B) site of Photosystem II. The protein is Photosystem II reaction center X protein of Prochlorococcus marinus (strain MIT 9515).